The primary structure comprises 606 residues: MSKNIPLISCSPFPASRKIYQQSPLFSDVRVPLREISLTDGSGEKPLNVYDTSGPYTDKEAIIDLTKGLPAIGSSWLSKRADTEPYPARSVKPEDNGLTSSPIPAFEKKRPILRAKSGKAITQMAYARAGIITAEMEYVAIRENEGLAIKDQQTVQSSPLGGEIPEIYTAEFVRNEIANGRAIIPQNINHPECEPMIIGRNFRVKINANIGNSAVTSSMAEEVDKMVWAIRWGADTVMDLSTGRNIHNIREWIIRNSPVPIGTVPLYQALEKVQGIAENLTWDIFRDTLIEQAEQGVDYFTIHAGLRLPFIPMTIDRITGIVSRGGSIMAKWCLHHHKESFLYENFDEICDIASTYDISLSLGDGLRPGSIADANDEAQFAELKTLGELTKTAWEKNVQVMIEGPGHVPMHKIKENMEQQLDLCHEAPFYTLGPLTTDIAPGYDHITSAIGAAMIGWFGTAMLCYVTPKEHLGLPDKNDVKTGVITYKIAAHAADLAKGLPRAQLRDNALSRARFDFRWHDQFNLSLDPETACAFHDETMPKDAHKLVHFCSMCGPKFCSMRISHDIRDAAALKKAKGEGMVAMAEKYQERGDIYVEAPQKKRVNS.

The interval 84-103 (EPYPARSVKPEDNGLTSSPI) is disordered. Residues Asn209, Met238, Tyr267, His303, 323–325 (SRG), 364–367 (DGLR), and Glu403 contribute to the substrate site. A Zn(2+)-binding site is contributed by His407. Position 430 (Tyr430) interacts with substrate. Zn(2+) is bound at residue His471. [4Fe-4S] cluster is bound by residues Cys551, Cys554, and Cys559.

This sequence belongs to the ThiC family. As to quaternary structure, homodimer. [4Fe-4S] cluster is required as a cofactor.

It carries out the reaction 5-amino-1-(5-phospho-beta-D-ribosyl)imidazole + S-adenosyl-L-methionine = 4-amino-2-methyl-5-(phosphooxymethyl)pyrimidine + CO + 5'-deoxyadenosine + formate + L-methionine + 3 H(+). Its pathway is cofactor biosynthesis; thiamine diphosphate biosynthesis. Catalyzes the synthesis of the hydroxymethylpyrimidine phosphate (HMP-P) moiety of thiamine from aminoimidazole ribotide (AIR) in a radical S-adenosyl-L-methionine (SAM)-dependent reaction. The polypeptide is Phosphomethylpyrimidine synthase (Bartonella tribocorum (strain CIP 105476 / IBS 506)).